The following is a 357-amino-acid chain: Phospho-N-acetylmuramoyl-pentapeptide-transferase (357 aa).

The next 10 helical transmembrane spans lie at Ala-23–Tyr-43, Thr-70–Leu-90, Ser-91–Ile-111, Leu-127–Ile-147, Tyr-171–Thr-191, Gly-196–Ser-216, Leu-236–Tyr-256, Val-260–Leu-280, Leu-286–Ile-306, and Leu-334–Leu-354.

The protein belongs to the glycosyltransferase 4 family. MraY subfamily. Mg(2+) serves as cofactor.

The protein localises to the cell inner membrane. It carries out the reaction UDP-N-acetyl-alpha-D-muramoyl-L-alanyl-gamma-D-glutamyl-meso-2,6-diaminopimeloyl-D-alanyl-D-alanine + di-trans,octa-cis-undecaprenyl phosphate = di-trans,octa-cis-undecaprenyl diphospho-N-acetyl-alpha-D-muramoyl-L-alanyl-D-glutamyl-meso-2,6-diaminopimeloyl-D-alanyl-D-alanine + UMP. Its pathway is cell wall biogenesis; peptidoglycan biosynthesis. Its function is as follows. Catalyzes the initial step of the lipid cycle reactions in the biosynthesis of the cell wall peptidoglycan: transfers peptidoglycan precursor phospho-MurNAc-pentapeptide from UDP-MurNAc-pentapeptide onto the lipid carrier undecaprenyl phosphate, yielding undecaprenyl-pyrophosphoryl-MurNAc-pentapeptide, known as lipid I. In Buchnera aphidicola subsp. Acyrthosiphon pisum (strain 5A), this protein is Phospho-N-acetylmuramoyl-pentapeptide-transferase.